Consider the following 142-residue polypeptide: Mitochondrial import receptor subunit TOM22 homolog (142 aa).

The span at 1 to 11 (MAAAVAAAGAG) shows a compositional bias: low complexity. Residues 1-42 (MAAAVAAAGAGEPQSPDELLPKGDAEKPEEELEEDDDEELDE) are disordered. Ala2 is modified (N-acetylalanine). Residues 2–83 (AAAVAAAGAG…AQKMYRFSRA (82 aa)) lie on the Cytoplasmic side of the membrane. Ser15 bears the Phosphoserine mark. The segment covering 27-42 (KPEEELEEDDDEELDE) has biased composition (acidic residues). Residues 41–50 (DETLSERLWG) are import sequence; necessary for mitochondrion outer membrane localization and integration in the TOM complex. Thr43 carries the phosphothreonine modification. At Ser45 the chain carries Phosphoserine. A TMD; necessary for mitochondrion outer membrane localization and integration in the TOM complex region spans residues 83 to 103 (AALWIGTTSFMILVLPVVFET). A helical transmembrane segment spans residues 84–103 (ALWIGTTSFMILVLPVVFET). Topologically, residues 104–142 (EKLQMEQQQQLQQRQILLGPNTGLSGGMPGALPSLPGKI) are mitochondrial intermembrane. Residues 123 to 142 (PNTGLSGGMPGALPSLPGKI) are C-tail signal; necessary for mitochondrion outer membrane localization and integration in the TOM complex.

This sequence belongs to the Tom22 family. Forms part of the preprotein translocase complex of the outer mitochondrial membrane (TOM complex) which consists of at least 7 different proteins (TOMM5, TOMM6, TOMM7, TOMM20, TOMM22, TOMM40 and TOMM70). Interacts with TOMM40. Interacts with PPP2R2B. In terms of tissue distribution, ubiquitous.

It localises to the mitochondrion outer membrane. Its function is as follows. Central receptor component of the translocase of the outer membrane of mitochondria (TOM complex) responsible for the recognition and translocation of cytosolically synthesized mitochondrial preproteins. Together with the peripheral receptor TOM20 functions as the transit peptide receptor and facilitates the movement of preproteins into the translocation pore. Required for the translocation across the mitochondrial outer membrane of cytochrome P450 monooxygenases. This chain is Mitochondrial import receptor subunit TOM22 homolog (TOMM22), found in Homo sapiens (Human).